Consider the following 64-residue polypeptide: Large ribosomal subunit protein uL29 (64 aa).

It belongs to the universal ribosomal protein uL29 family.

This Burkholderia mallei (strain NCTC 10247) protein is Large ribosomal subunit protein uL29.